The following is an 86-amino-acid chain: Protein Tat (86 aa).

The interval 1–24 (MEPVDPRLEPWKHPGSQPKTACTN) is interaction with human CREBBP. The transactivation stretch occupies residues 1–48 (MEPVDPRLEPWKHPGSQPKTACTNCYCKKCCFHCQVCFITKALGISYG). Cys-22, Cys-25, and Cys-27 together coordinate Zn(2+). Residues 22 to 37 (CTNCYCKKCCFHCQVC) are cysteine-rich. An N6-acetyllysine; by host PCAF modification is found at Lys-28. 4 residues coordinate Zn(2+): Cys-30, His-33, Cys-34, and Cys-37. A core region spans residues 38-48 (FITKALGISYG). The span at 48-58 (GRKKRRQRRRA) shows a compositional bias: basic residues. Residues 48-86 (GRKKRRQRRRAPQGSQTHQVSLSKQPTSQSRGDPTGPKE) are disordered. A Nuclear localization signal, RNA-binding (TAR), and protein transduction motif is present at residues 49 to 57 (RKKRRQRRR). The interaction with the host capping enzyme RNGTT stretch occupies residues 49 to 86 (RKKRRQRRRAPQGSQTHQVSLSKQPTSQSRGDPTGPKE). N6-acetyllysine; by host EP300 and GCN5L2 is present on residues Lys-50 and Lys-51. Arg-52 and Arg-53 each carry asymmetric dimethylarginine; by host PRMT6. A compositionally biased stretch (polar residues) spans 60 to 79 (QGSQTHQVSLSKQPTSQSRG). Residue Lys-71 forms a Glycyl lysine isopeptide (Lys-Gly) (interchain with G-Cter in ubiquitin) linkage. Positions 78–80 (RGD) match the Cell attachment site motif.

It belongs to the lentiviruses Tat family. As to quaternary structure, interacts with host CCNT1. Associates with the P-TEFb complex composed at least of Tat, P-TEFb (CDK9 and CCNT1), TAR RNA, RNA Pol II. Recruits the HATs CREBBP, TAF1/TFIID, EP300, PCAF and GCN5L2. Interacts with host KAT5/Tip60; this interaction targets the latter to degradation. Interacts with the host deacetylase SIRT1. Interacts with host capping enzyme RNGTT; this interaction stimulates RNGTT. Binds to host KDR, and to the host integrins ITGAV/ITGB3 and ITGA5/ITGB1. Interacts with host KPNB1/importin beta-1 without previous binding to KPNA1/importin alpha-1. Interacts with EIF2AK2. Interacts with host nucleosome assembly protein NAP1L1; this interaction may be required for the transport of Tat within the nucleus, since the two proteins interact at the nuclear rim. Interacts with host C1QBP/SF2P32; this interaction involves lysine-acetylated Tat. Interacts with the host chemokine receptors CCR2, CCR3 and CXCR4. Interacts with host DPP4/CD26; this interaction may trigger an anti-proliferative effect. Interacts with host LDLR. Interacts with the host extracellular matrix metalloproteinase MMP1. Interacts with host PRMT6; this interaction mediates Tat's methylation. Interacts with, and is ubiquitinated by MDM2/Hdm2. Interacts with host PSMC3 and HTATIP2. Interacts with STAB1; this interaction may overcome SATB1-mediated repression of IL2 and IL2RA (interleukin) in T cells by binding to the same domain than HDAC1. Interacts (when acetylated) with human CDK13, thereby increasing HIV-1 mRNA splicing and promoting the production of the doubly spliced HIV-1 protein Nef. Interacts with host TBP; this interaction modulates the activity of transcriptional pre-initiation complex. Interacts with host RELA. Interacts with host PLSCR1; this interaction negatively regulates Tat transactivation activity by altering its subcellular distribution. In terms of processing, asymmetrical arginine methylation by host PRMT6 seems to diminish the transactivation capacity of Tat and affects the interaction with host CCNT1. Post-translationally, acetylation by EP300, CREBBP, GCN5L2/GCN5 and PCAF regulates the transactivation activity of Tat. EP300-mediated acetylation of Lys-50 promotes dissociation of Tat from the TAR RNA through the competitive binding to PCAF's bromodomain. In addition, the non-acetylated Tat's N-terminus can also interact with PCAF. PCAF-mediated acetylation of Lys-28 enhances Tat's binding to CCNT1. Lys-50 is deacetylated by SIRT1. Polyubiquitination by host MDM2 does not target Tat to degradation, but activates its transactivation function and fosters interaction with CCNT1 and TAR RNA. In terms of processing, phosphorylated by EIF2AK2 on serine and threonine residues adjacent to the basic region important for TAR RNA binding and function. Phosphorylation of Tat by EIF2AK2 is dependent on the prior activation of EIF2AK2 by dsRNA.

The protein localises to the host nucleus. The protein resides in the host nucleolus. It is found in the host cytoplasm. It localises to the secreted. In terms of biological role, transcriptional activator that increases RNA Pol II processivity, thereby increasing the level of full-length viral transcripts. Recognizes a hairpin structure at the 5'-LTR of the nascent viral mRNAs referred to as the transactivation responsive RNA element (TAR) and recruits the cyclin T1-CDK9 complex (P-TEFb complex) that will in turn hyperphosphorylate the RNA polymerase II to allow efficient elongation. The CDK9 component of P-TEFb and other Tat-activated kinases hyperphosphorylate the C-terminus of RNA Pol II that becomes stabilized and much more processive. Other factors such as HTATSF1/Tat-SF1, SUPT5H/SPT5, and HTATIP2 are also important for Tat's function. Besides its effect on RNA Pol II processivity, Tat induces chromatin remodeling of proviral genes by recruiting the histone acetyltransferases (HATs) CREBBP, EP300 and PCAF to the chromatin. This also contributes to the increase in proviral transcription rate, especially when the provirus integrates in transcriptionally silent region of the host genome. To ensure maximal activation of the LTR, Tat mediates nuclear translocation of NF-kappa-B by interacting with host RELA. Through its interaction with host TBP, Tat may also modulate transcription initiation. Tat can reactivate a latently infected cell by penetrating in it and transactivating its LTR promoter. In the cytoplasm, Tat is thought to act as a translational activator of HIV-1 mRNAs. Functionally, extracellular circulating Tat can be endocytosed by surrounding uninfected cells via the binding to several surface receptors such as CD26, CXCR4, heparan sulfate proteoglycans (HSPG) or LDLR. Neurons are rarely infected, but they internalize Tat via their LDLR. Through its interaction with nuclear HATs, Tat is potentially able to control the acetylation-dependent cellular gene expression. Modulates the expression of many cellular genes involved in cell survival, proliferation or in coding for cytokines or cytokine receptors. Tat plays a role in T-cell and neurons apoptosis. Tat induced neurotoxicity and apoptosis probably contribute to neuroAIDS. Circulating Tat also acts as a chemokine-like and/or growth factor-like molecule that binds to specific receptors on the surface of the cells, affecting many cellular pathways. In the vascular system, Tat binds to ITGAV/ITGB3 and ITGA5/ITGB1 integrins dimers at the surface of endothelial cells and competes with bFGF for heparin-binding sites, leading to an excess of soluble bFGF. The sequence is that of Protein Tat from Human immunodeficiency virus type 1 group M subtype B (isolate PCV12) (HIV-1).